A 636-amino-acid chain; its full sequence is Threonine--tRNA ligase (636 aa).

One can recognise a TGS domain in the interval 1-61; the sequence is MPVITLPDGS…TQDVSLSIIT (61 aa). Positions 242-533 are catalytic; that stretch reads DHRKLGKKFD…LIEEYEGAFP (292 aa). Zn(2+) is bound by residues C333, H384, and H510.

It belongs to the class-II aminoacyl-tRNA synthetase family. In terms of assembly, homodimer. The cofactor is Zn(2+).

The protein resides in the cytoplasm. It catalyses the reaction tRNA(Thr) + L-threonine + ATP = L-threonyl-tRNA(Thr) + AMP + diphosphate + H(+). In terms of biological role, catalyzes the attachment of threonine to tRNA(Thr) in a two-step reaction: L-threonine is first activated by ATP to form Thr-AMP and then transferred to the acceptor end of tRNA(Thr). Also edits incorrectly charged L-seryl-tRNA(Thr). This is Threonine--tRNA ligase from Saccharophagus degradans (strain 2-40 / ATCC 43961 / DSM 17024).